We begin with the raw amino-acid sequence, 303 residues long: 4-hydroxy-tetrahydrodipicolinate synthase (303 aa).

Position 57 (T57) interacts with pyruvate. The Proton donor/acceptor role is filled by Y143. K171 (schiff-base intermediate with substrate) is an active-site residue. I211 serves as a coordination point for pyruvate.

Belongs to the DapA family. Homotetramer; dimer of dimers.

The protein resides in the cytoplasm. The catalysed reaction is L-aspartate 4-semialdehyde + pyruvate = (2S,4S)-4-hydroxy-2,3,4,5-tetrahydrodipicolinate + H2O + H(+). It functions in the pathway amino-acid biosynthesis; L-lysine biosynthesis via DAP pathway; (S)-tetrahydrodipicolinate from L-aspartate: step 3/4. In terms of biological role, catalyzes the condensation of (S)-aspartate-beta-semialdehyde [(S)-ASA] and pyruvate to 4-hydroxy-tetrahydrodipicolinate (HTPA). The polypeptide is 4-hydroxy-tetrahydrodipicolinate synthase (Bifidobacterium animalis subsp. lactis (strain AD011)).